Consider the following 487-residue polypeptide: GTPase Der (487 aa).

EngA-type G domains follow at residues 3–167 (FTLA…EGFA) and 203–378 (LQIA…DIWN). GTP-binding positions include 9–16 (GRPNVGKS), 56–60 (DTAGL), 119–122 (NKAE), 209–216 (GRPNAGKS), 256–260 (DTAGM), and 321–324 (NKWD). In terms of domain architecture, KH-like spans 379-463 (RRITTARLNS…PIRLTMRGQG (85 aa)). A disordered region spans residues 459–487 (MRGQGDKNPFKERKFRTPSRLRKHLGKKG). The span at 471 to 487 (RKFRTPSRLRKHLGKKG) shows a compositional bias: basic residues.

Belongs to the TRAFAC class TrmE-Era-EngA-EngB-Septin-like GTPase superfamily. EngA (Der) GTPase family. As to quaternary structure, associates with the 50S ribosomal subunit.

In terms of biological role, GTPase that plays an essential role in the late steps of ribosome biogenesis. The chain is GTPase Der from Cereibacter sphaeroides (strain ATCC 17025 / ATH 2.4.3) (Rhodobacter sphaeroides).